A 292-amino-acid chain; its full sequence is Elongation factor Ts (292 aa).

The involved in Mg(2+) ion dislocation from EF-Tu stretch occupies residues 80 to 83; it reads TDFV.

It belongs to the EF-Ts family.

It localises to the cytoplasm. Functionally, associates with the EF-Tu.GDP complex and induces the exchange of GDP to GTP. It remains bound to the aminoacyl-tRNA.EF-Tu.GTP complex up to the GTP hydrolysis stage on the ribosome. The chain is Elongation factor Ts from Ralstonia pickettii (strain 12J).